The chain runs to 727 residues: MMTMQQTEFDSQFNEHIYRIVHVVHHQPHAFLGLHSFFEGSKVIRLWRPNAQQIFLELFGNIVEARRIHEMGIFECIVPSHTTAIDYKIFHQNGKLHFDPYAFLPTFGEVDQYLFGKGVHYELYHQMGGRLATHQGIQGVKFAVWAPNAKSVSLIADFNHWDGKVNPMRIMGYSGVWELFVPGLQEGEKYKFEIHTQQGERILKSDPYALSSELRPATASKIANIERFQWQDQAWMEQRKAKNWTSLPMNIYEVHLGSWKKKDSNSEFLNYRELAHELTAYCLDMGFTHIELLPIQEHPLDESWGYQVSGFYAPTSRFGHPEDFQYFVNYLHQHQISLILDWVPGHFPTDAFSLARFDGSALYEHADPRQGYHPHWHTNIFNFGRHEVSNFLIANALYWLEIMHVDGLRVDAVASMLYLDYGREENEWIPNDVGGKENLQAIEFLKHLNSIVHSKCPGSLMIAEESTSFTGVTHSVEKGGLGFDLKWNMGWMNDTLRYFSKDMLFRNYHHHDLTFGLVYAFSEKFISVFSHDEVVHGKKSLLSKMPGDMWQQFANLRLLISYMICQPGKKLLFMGAEIGQWNEWNCKSGLEWFLLQFPTHAGIHKFVQEINHFYLKQPALWQKDFSHESFEWVDFADMHNSVISYVRKGGTERLLCVHNFTPLYHSDYILHLSQFEHIEEIFNSDAEKFGGSGKHNLNPEIIRNEARSVIGLRLILAPLATLIFKLS.

Aspartate 411 (nucleophile) is an active-site residue. Glutamate 464 serves as the catalytic Proton donor.

This sequence belongs to the glycosyl hydrolase 13 family. GlgB subfamily. In terms of assembly, monomer.

The enzyme catalyses Transfers a segment of a (1-&gt;4)-alpha-D-glucan chain to a primary hydroxy group in a similar glucan chain.. The protein operates within glycan biosynthesis; glycogen biosynthesis. Functionally, catalyzes the formation of the alpha-1,6-glucosidic linkages in glycogen by scission of a 1,4-alpha-linked oligosaccharide from growing alpha-1,4-glucan chains and the subsequent attachment of the oligosaccharide to the alpha-1,6 position. This chain is 1,4-alpha-glucan branching enzyme GlgB, found in Protochlamydia amoebophila (strain UWE25).